Reading from the N-terminus, the 374-residue chain is Queuine tRNA-ribosyltransferase (374 aa).

Residue Asp94 is the Proton acceptor of the active site. Substrate is bound by residues 94 to 98, Asp148, Gln191, and Gly218; that span reads DSGGF. The segment at 249–255 is RNA binding; that stretch reads GVGSPDY. The Nucleophile role is filled by Asp268. An RNA binding; important for wobble base 34 recognition region spans residues 273–277; that stretch reads TRIGR. Positions 306, 308, 311, and 337 each coordinate Zn(2+).

Belongs to the queuine tRNA-ribosyltransferase family. As to quaternary structure, homodimer. Within each dimer, one monomer is responsible for RNA recognition and catalysis, while the other monomer binds to the replacement base PreQ1. Zn(2+) serves as cofactor.

It catalyses the reaction 7-aminomethyl-7-carbaguanine + guanosine(34) in tRNA = 7-aminomethyl-7-carbaguanosine(34) in tRNA + guanine. It functions in the pathway tRNA modification; tRNA-queuosine biosynthesis. Catalyzes the base-exchange of a guanine (G) residue with the queuine precursor 7-aminomethyl-7-deazaguanine (PreQ1) at position 34 (anticodon wobble position) in tRNAs with GU(N) anticodons (tRNA-Asp, -Asn, -His and -Tyr). Catalysis occurs through a double-displacement mechanism. The nucleophile active site attacks the C1' of nucleotide 34 to detach the guanine base from the RNA, forming a covalent enzyme-RNA intermediate. The proton acceptor active site deprotonates the incoming PreQ1, allowing a nucleophilic attack on the C1' of the ribose to form the product. After dissociation, two additional enzymatic reactions on the tRNA convert PreQ1 to queuine (Q), resulting in the hypermodified nucleoside queuosine (7-(((4,5-cis-dihydroxy-2-cyclopenten-1-yl)amino)methyl)-7-deazaguanosine). The sequence is that of Queuine tRNA-ribosyltransferase from Acetivibrio thermocellus (strain ATCC 27405 / DSM 1237 / JCM 9322 / NBRC 103400 / NCIMB 10682 / NRRL B-4536 / VPI 7372) (Clostridium thermocellum).